The sequence spans 184 residues: Ras-related protein Rap-1b (184 aa).

GTP is bound at residue 10–18 (GSGGVGKSA). The tract at residues 25 to 67 (QGIFVEKYDPTIEDSYRKQVEVDAQQCMLEILDTAGTEQFTAM) is interaction with KRIT1. The Effector region signature appears at 32 to 40 (YDPTIEDSY). Ser39 carries the post-translational modification ADP-ribosylserine; by botulinum toxin. GTP-binding positions include 57–61 (DTAGT), 116–119 (NKCD), and 147–149 (SAK). Position 179 is a phosphoserine; by PKA (Ser179). Cysteine methyl ester is present on Cys181. Residue Cys181 is the site of S-geranylgeranyl cysteine attachment. A propeptide spans 182–184 (QLL) (removed in mature form).

The protein belongs to the small GTPase superfamily. Ras family. In terms of assembly, heterodimer with RAP1GAP. Interacts with EPAC2. Interacts with SGSM1. Interacts with SGSM2. Interacts with SGSM3. Interacts with KRIT1. Interacts with RAP1GDS1.

It is found in the cell membrane. It localises to the cytoplasm. The protein localises to the cytosol. The protein resides in the cell junction. It catalyses the reaction GTP + H2O = GDP + phosphate + H(+). Activated by guanine nucleotide-exchange factor (GEF) EPAC2 in a cAMP-dependent manner. Functionally, GTP-binding protein that possesses intrinsic GTPase activity. Contributes to the polarizing activity of KRIT1 and CDH5 in the establishment and maintenance of correct endothelial cell polarity and vascular lumen. Required for the localization of phosphorylated PRKCZ, PARD3 and TIAM1 to the cell junction. Plays a role in the establishment of basal endothelial barrier function. This chain is Ras-related protein Rap-1b (Rap1b), found in Rattus norvegicus (Rat).